Reading from the N-terminus, the 140-residue chain is Mediator of RNA polymerase II transcription subunit 21 (140 aa).

Residues 52–130 adopt a coiled-coil conformation; that stretch reads EERERTLEEL…CDELILKLAQ (79 aa).

Belongs to the Mediator complex subunit 21 family. Component of the Mediator complex.

It is found in the nucleus. In terms of biological role, component of the Mediator complex, a coactivator involved in the regulated transcription of nearly all RNA polymerase II-dependent genes. Mediator functions as a bridge to convey information from gene-specific regulatory proteins to the basal RNA polymerase II transcription machinery. Mediator is recruited to promoters by direct interactions with regulatory proteins and serves as a scaffold for the assembly of a functional preinitiation complex with RNA polymerase II and the general transcription factors. This Yarrowia lipolytica (strain CLIB 122 / E 150) (Yeast) protein is Mediator of RNA polymerase II transcription subunit 21 (SRB7).